A 104-amino-acid polypeptide reads, in one-letter code: Large ribosomal subunit protein bL21 (104 aa).

It belongs to the bacterial ribosomal protein bL21 family. In terms of assembly, part of the 50S ribosomal subunit. Contacts protein L20.

Functionally, this protein binds to 23S rRNA in the presence of protein L20. This Helicobacter hepaticus (strain ATCC 51449 / 3B1) protein is Large ribosomal subunit protein bL21.